The chain runs to 260 residues: Tetraspanin-14 (260 aa).

The Cytoplasmic segment spans residues 1–10; it reads MKSQSHKPWN. A helical transmembrane segment spans residues 11-31; that stretch reads LVAGIFFPIITFFLSAPLVGH. Residues 32–54 are Extracellular-facing; it reads ALYLFCMRNDHVYYRDFQSTLPR. The chain crosses the membrane as a helical span at residues 55–75; it reads VQTLVSVSLLALFLLSNIGMF. Over 76–80 the chain is Cytoplasmic; the sequence is LRPRR. A helical membrane pass occupies residues 81-101; it reads LSYFLVIVFFIGFAYSGVYKM. Residues 102-260 are Extracellular-facing; the sequence is ESRRFSPTPM…FLSSLTSLFR (159 aa). Asn182 carries N-linked (GlcNAc...) asparagine glycosylation.

Belongs to the tetraspanin (TM4SF) family.

Its subcellular location is the membrane. In terms of biological role, may be involved in the regulation of cell differentiation. The polypeptide is Tetraspanin-14 (TET14) (Arabidopsis thaliana (Mouse-ear cress)).